The primary structure comprises 999 residues: Hypoxia up-regulated protein 1 (999 aa).

Positions 1–32 (MADKVRRQRPRRRVCWALVAVLLADLLALSDT) are cleaved as a signal peptide. 3 N-linked (GlcNAc...) asparagine glycosylation sites follow: N155, N222, and N515. At S567 the chain carries Phosphoserine. A disordered region spans residues 578-694 (GNTISSLFGG…KKQKPARKRR (117 aa)). An N-linked (GlcNAc...) asparagine glycan is attached at N596. Basic and acidic residues-rich tracts occupy residues 611 to 626 (GSKD…KEEA) and 641 to 672 (PKGD…KAEA). Residues N830, N862, and N869 are each glycosylated (N-linked (GlcNAc...) asparagine). K883 is subject to N6-acetyllysine. The disordered stretch occupies residues 909–999 (AKFTKPRPRP…QKRPLKNDEL (91 aa)). N-linked (GlcNAc...) asparagine glycans are attached at residues N922 and N931. The Prevents secretion from ER motif lies at 996–999 (NDEL).

It belongs to the heat shock protein 70 family. As to quaternary structure, part of a large chaperone multiprotein complex comprising DNAJB11, HSP90B1, HSPA5, HYOU, PDIA2, PDIA4, PDIA6, PPIB, SDF2L1, UGGT1 and very small amounts of ERP29, but not, or at very low levels, CALR nor CANX. Highly expressed in tissues that contain well-developed endoplasmic reticulum and synthesize large amounts of secretory proteins. Highly expressed in liver and pancreas and lower expression in brain and kidney. Also expressed in macrophages within aortic atherosclerotic plaques, and in breast cancers.

It is found in the endoplasmic reticulum lumen. Its function is as follows. Has a pivotal role in cytoprotective cellular mechanisms triggered by oxygen deprivation. Promotes HSPA5/BiP-mediated ATP nucleotide exchange and thereby activates the unfolded protein response (UPR) pathway in the presence of endoplasmic reticulum stress. May play a role as a molecular chaperone and participate in protein folding. The chain is Hypoxia up-regulated protein 1 (HYOU1) from Homo sapiens (Human).